The primary structure comprises 499 residues: Aspartyl/glutamyl-tRNA(Asn/Gln) amidotransferase subunit B (499 aa).

This sequence belongs to the GatB/GatE family. GatB subfamily. As to quaternary structure, heterotrimer of A, B and C subunits.

It carries out the reaction L-glutamyl-tRNA(Gln) + L-glutamine + ATP + H2O = L-glutaminyl-tRNA(Gln) + L-glutamate + ADP + phosphate + H(+). It catalyses the reaction L-aspartyl-tRNA(Asn) + L-glutamine + ATP + H2O = L-asparaginyl-tRNA(Asn) + L-glutamate + ADP + phosphate + 2 H(+). Allows the formation of correctly charged Asn-tRNA(Asn) or Gln-tRNA(Gln) through the transamidation of misacylated Asp-tRNA(Asn) or Glu-tRNA(Gln) in organisms which lack either or both of asparaginyl-tRNA or glutaminyl-tRNA synthetases. The reaction takes place in the presence of glutamine and ATP through an activated phospho-Asp-tRNA(Asn) or phospho-Glu-tRNA(Gln). This is Aspartyl/glutamyl-tRNA(Asn/Gln) amidotransferase subunit B from Bifidobacterium animalis subsp. lactis (strain AD011).